The sequence spans 435 residues: Mitochondrial association factor 1 form a1 (435 aa).

Residues 1-20 (MWRIWRCRLSFLFATGCLLG) form the signal peptide. The Vacuolar segment spans residues 21-96 (ALTAGLGSQM…VTARRRRNRR (76 aa)). A helical transmembrane segment spans residues 97–117 (IALIATAVGVAVILAALYVLR). The Cytoplasmic segment spans residues 118–435 (RRRAQPPQEP…ERTYTFPQGD (318 aa)). A disordered region spans residues 120–159 (RAQPPQEPEPPTRLRTPRPRAPSGQQQPSESEPPAGVPMT).

In terms of assembly, interacts with host SAMM50.

Its subcellular location is the parasitophorous vacuole membrane. Its function is as follows. During host cell infection by tachyzoites, does not play a role in tethering the parasitophorous vacuole to the host mitochondria, probably because it does not bind host mitochondrial import protein TOMM70. The sequence is that of Mitochondrial association factor 1 form a1 from Toxoplasma gondii (strain ATCC 50611 / Me49).